A 562-amino-acid chain; its full sequence is Malate synthase (562 aa).

The active-site Proton acceptor is the R177. The Proton donor role is filled by D463. The Microbody targeting signal signature appears at 560–562; the sequence is SRL.

The protein belongs to the malate synthase family.

The protein resides in the glyoxysome. The enzyme catalyses glyoxylate + acetyl-CoA + H2O = (S)-malate + CoA + H(+). It functions in the pathway carbohydrate metabolism; glyoxylate cycle; (S)-malate from isocitrate: step 2/2. Its function is as follows. Does not seem to be essential for lipid utilization and gluconeogenesis in seedlings. This is Malate synthase from Arabidopsis thaliana (Mouse-ear cress).